The sequence spans 1380 residues: DNA-directed RNA polymerase subunit beta (1380 aa).

The protein belongs to the RNA polymerase beta chain family. The RNAP catalytic core consists of 2 alpha, 1 beta, 1 beta' and 1 omega subunit. When a sigma factor is associated with the core the holoenzyme is formed, which can initiate transcription.

It carries out the reaction RNA(n) + a ribonucleoside 5'-triphosphate = RNA(n+1) + diphosphate. Its function is as follows. DNA-dependent RNA polymerase catalyzes the transcription of DNA into RNA using the four ribonucleoside triphosphates as substrates. In Rhizobium rhizogenes (strain K84 / ATCC BAA-868) (Agrobacterium radiobacter), this protein is DNA-directed RNA polymerase subunit beta.